A 512-amino-acid chain; its full sequence is Maturase K (512 aa).

The protein belongs to the intron maturase 2 family. MatK subfamily.

It is found in the plastid. Its subcellular location is the chloroplast. Functionally, usually encoded in the trnK tRNA gene intron. Probably assists in splicing its own and other chloroplast group II introns. The sequence is that of Maturase K from Alisma canaliculatum (Water plantain).